Consider the following 591-residue polypeptide: Pentatricopeptide repeat-containing protein At3g47530 (591 aa).

PPR repeat units follow at residues 76 to 110, 112 to 146, 147 to 177, 178 to 208, 216 to 250, 251 to 281, 282 to 316, 317 to 351, and 354 to 384; these read TLSH…SSLP, NPLS…GFLS, DSLL…IPKR, DTVS…MKND, DGVT…GLSG, ALNL…MRER, NVVS…GISP, EEQT…EFKI, and NLHH…MEMK. Positions 389 to 464 are type E motif; the sequence is IWRTLLGACR…KPGCSAIELQ (76 aa). Residues 465 to 495 form a type E(+) motif region; it reads GTVHEFIVDDVSHPRKEEIYKMLAEINQQLK. The type DYW motif stretch occupies residues 496–591; sequence IAGYVAEITS…GGSCSCNDFW (96 aa).

Belongs to the PPR family. PCMP-H subfamily.

The chain is Pentatricopeptide repeat-containing protein At3g47530 (PCMP-H76) from Arabidopsis thaliana (Mouse-ear cress).